The primary structure comprises 404 residues: Tryptophan synthase beta chain (404 aa).

Residue lysine 94 is modified to N6-(pyridoxal phosphate)lysine.

Belongs to the TrpB family. Tetramer of two alpha and two beta chains. It depends on pyridoxal 5'-phosphate as a cofactor.

It carries out the reaction (1S,2R)-1-C-(indol-3-yl)glycerol 3-phosphate + L-serine = D-glyceraldehyde 3-phosphate + L-tryptophan + H2O. It participates in amino-acid biosynthesis; L-tryptophan biosynthesis; L-tryptophan from chorismate: step 5/5. Functionally, the beta subunit is responsible for the synthesis of L-tryptophan from indole and L-serine. The polypeptide is Tryptophan synthase beta chain (Staphylococcus aureus (strain MRSA252)).